The primary structure comprises 204 residues: Protein OPG030 (204 aa).

Residues 95–177 form the BACK domain; that stretch reads FLRQYINNNI…ITYSELTNAI (83 aa).

This sequence belongs to the orthopoxvirus OPG030 family.

This is Protein OPG030 (OPG30) from Homo sapiens (Human).